The primary structure comprises 187 residues: GTP cyclohydrolase 1 (187 aa).

Positions 81, 84, and 152 each coordinate Zn(2+).

This sequence belongs to the GTP cyclohydrolase I family. As to quaternary structure, toroid-shaped homodecamer, composed of two pentamers of five dimers.

It carries out the reaction GTP + H2O = 7,8-dihydroneopterin 3'-triphosphate + formate + H(+). The protein operates within cofactor biosynthesis; 7,8-dihydroneopterin triphosphate biosynthesis; 7,8-dihydroneopterin triphosphate from GTP: step 1/1. This is GTP cyclohydrolase 1 from Pyrobaculum aerophilum (strain ATCC 51768 / DSM 7523 / JCM 9630 / CIP 104966 / NBRC 100827 / IM2).